A 341-amino-acid chain; its full sequence is S-adenosylmethionine:tRNA ribosyltransferase-isomerase (341 aa).

The protein belongs to the QueA family. As to quaternary structure, monomer.

Its subcellular location is the cytoplasm. The enzyme catalyses 7-aminomethyl-7-carbaguanosine(34) in tRNA + S-adenosyl-L-methionine = epoxyqueuosine(34) in tRNA + adenine + L-methionine + 2 H(+). It participates in tRNA modification; tRNA-queuosine biosynthesis. In terms of biological role, transfers and isomerizes the ribose moiety from AdoMet to the 7-aminomethyl group of 7-deazaguanine (preQ1-tRNA) to give epoxyqueuosine (oQ-tRNA). This Clostridium botulinum (strain Kyoto / Type A2) protein is S-adenosylmethionine:tRNA ribosyltransferase-isomerase.